A 282-amino-acid chain; its full sequence is MKKLSVIFLSVSMLSSIAFGDEDKVVATYKGGEVKESQIMQEFKPQLNLQSGETIKNFDDFPLQDQEKLIKIYVNNLLLKEEVAKSSITSSKEFQEKLENAKNQLAQQELLANYIKSNITDKMFDDEYNKYVDNLKGKEQIKVAHILVKSQKEANTVKTKLSKGGNFTKLAEEFSLDKATASNGGIIGYIILNQPGQLVPEFEQKAFALKVNEVSTPVKTSFGWHIIKVLEKKPVPIPTKEEAKVTIDNILAAEILKQYISDLEAKADLKIMLPKANSKTGS.

The signal sequence occupies residues 1–20; sequence MKKLSVIFLSVSMLSSIAFG. The region spanning 138-231 is the PpiC domain; that stretch reads KEQIKVAHIL…FGWHIIKVLE (94 aa).

The protein belongs to the PpiC/parvulin rotamase family.

The protein localises to the cell outer membrane. The catalysed reaction is [protein]-peptidylproline (omega=180) = [protein]-peptidylproline (omega=0). The sequence is that of Parvulin-like PPIase (plp) from Rickettsia prowazekii (strain Madrid E).